The primary structure comprises 388 residues: S-adenosylmethionine synthase (388 aa).

An ATP-binding site is contributed by H16. D18 serves as a coordination point for Mg(2+). E44 contributes to the K(+) binding site. E57 and Q100 together coordinate L-methionine. The segment at 100 to 110 (QSPEIAQGVDR) is flexible loop. ATP is bound by residues 165–167 (DAK), D240, 246–247 (RK), A263, and K267. L-methionine is bound at residue D240. Residue K271 coordinates L-methionine.

The protein belongs to the AdoMet synthase family. In terms of assembly, homotetramer; dimer of dimers. It depends on Mg(2+) as a cofactor. The cofactor is K(+).

Its subcellular location is the cytoplasm. It catalyses the reaction L-methionine + ATP + H2O = S-adenosyl-L-methionine + phosphate + diphosphate. It functions in the pathway amino-acid biosynthesis; S-adenosyl-L-methionine biosynthesis; S-adenosyl-L-methionine from L-methionine: step 1/1. Functionally, catalyzes the formation of S-adenosylmethionine (AdoMet) from methionine and ATP. The overall synthetic reaction is composed of two sequential steps, AdoMet formation and the subsequent tripolyphosphate hydrolysis which occurs prior to release of AdoMet from the enzyme. The sequence is that of S-adenosylmethionine synthase from Acinetobacter baumannii (strain AYE).